We begin with the raw amino-acid sequence, 394 residues long: Protein TsgA homolog (394 aa).

A run of 12 helical transmembrane segments spans residues 11–31 (WISY…GMVM), 51–71 (FLNA…EIIP), 76–96 (LVFG…GHNL), 101–121 (ISMF…TFLI), 134–154 (LLFT…AAAI), 162–182 (WYWV…LTLC), 206–226 (MGVL…LGFI), 246–266 (QLVS…SFIL), 274–294 (IVTV…STNN), 302–322 (ILAL…LGSL), 334–354 (FILT…GPIV), and 363–383 (LATA…LGFF).

The protein belongs to the major facilitator superfamily. TsgA family.

It is found in the cell inner membrane. The chain is Protein TsgA homolog from Yersinia enterocolitica serotype O:8 / biotype 1B (strain NCTC 13174 / 8081).